The sequence spans 278 residues: Imidazole glycerol phosphate synthase subunit HisF (278 aa).

Residues Asp11 and Asp130 contribute to the active site.

It belongs to the HisA/HisF family. Heterodimer of HisH and HisF.

The protein localises to the cytoplasm. It catalyses the reaction 5-[(5-phospho-1-deoxy-D-ribulos-1-ylimino)methylamino]-1-(5-phospho-beta-D-ribosyl)imidazole-4-carboxamide + L-glutamine = D-erythro-1-(imidazol-4-yl)glycerol 3-phosphate + 5-amino-1-(5-phospho-beta-D-ribosyl)imidazole-4-carboxamide + L-glutamate + H(+). The protein operates within amino-acid biosynthesis; L-histidine biosynthesis; L-histidine from 5-phospho-alpha-D-ribose 1-diphosphate: step 5/9. Its function is as follows. IGPS catalyzes the conversion of PRFAR and glutamine to IGP, AICAR and glutamate. The HisF subunit catalyzes the cyclization activity that produces IGP and AICAR from PRFAR using the ammonia provided by the HisH subunit. The sequence is that of Imidazole glycerol phosphate synthase subunit HisF from Thermodesulfovibrio yellowstonii (strain ATCC 51303 / DSM 11347 / YP87).